Consider the following 229-residue polypeptide: HTH-type transcriptional regulator HbdR (229 aa).

One can recognise an HTH tetR-type domain in the interval 20 to 80 (EERRHQIISA…LTLKNVLDTY (61 aa)). A DNA-binding region (H-T-H motif) is located at residues 43–62 (TILQIAREAKVSTGLIYQYF).

In terms of assembly, homodimer in solution.

Activity is regulated by the effector molecules 3-hydroxybenzoyl-CoA and benzoyl-CoA, which bind to HbdR, alleviating its repression on the three target promoters and inducing the expression of the hbd genes. Transcriptional regulator that controls the expression of the hbd cluster, which contains three catabolic operons and is responsible for the anaerobic degradation of 3-hydroxybenzoate. HbdR suppresses the activity of the three catabolic promoters (PhbdN, PhbdE and PhbdH) by binding to a conserved palindromic operator box. In addition, it slightly increases activity of its own promoter (PhbdR). The HbdR-mediated repression of hbd genes may play a crucial biological role in maintaining requisite hydroxybenzoate levels in the cell. The sequence is that of HTH-type transcriptional regulator HbdR from Aromatoleum sp. (strain CIB) (Azoarcus sp. (strain CIB)).